Consider the following 431-residue polypeptide: Adenylosuccinate synthetase (431 aa).

Residues 12–18 and 40–42 each bind GTP; these read GDEGKGK and GHT. Aspartate 13 (proton acceptor) is an active-site residue. Mg(2+) is bound by residues aspartate 13 and glycine 40. IMP is bound by residues 13–16, 38–41, threonine 131, arginine 145, glutamine 225, threonine 240, and arginine 304; these read DEGK and NAGH. Histidine 41 acts as the Proton donor in catalysis. 300–306 provides a ligand contact to substrate; that stretch reads VNTGRRR. GTP contacts are provided by residues arginine 306, 332–334, and 414–416; these read KLD and STS.

The protein belongs to the adenylosuccinate synthetase family. As to quaternary structure, homodimer. The cofactor is Mg(2+).

It is found in the cytoplasm. It carries out the reaction IMP + L-aspartate + GTP = N(6)-(1,2-dicarboxyethyl)-AMP + GDP + phosphate + 2 H(+). The protein operates within purine metabolism; AMP biosynthesis via de novo pathway; AMP from IMP: step 1/2. Plays an important role in the de novo pathway of purine nucleotide biosynthesis. Catalyzes the first committed step in the biosynthesis of AMP from IMP. The protein is Adenylosuccinate synthetase of Beijerinckia indica subsp. indica (strain ATCC 9039 / DSM 1715 / NCIMB 8712).